We begin with the raw amino-acid sequence, 1647 residues long: Cortactin-binding protein 2 (1647 aa).

5 disordered regions span residues 1–27 (MATD…AEAA), 202–222 (EKKK…RSTE), 318–427 (HVKK…QPGL), 440–468 (GNAN…RDNL), and 482–604 (LSRF…PSID). A coiled-coil region spans residues 120 to 276 (KMQERMATQL…EQLKRGSDSK (157 aa)). The span at 362-372 (SSAPSLPPASA) shows a compositional bias: low complexity. A compositionally biased stretch (polar residues) spans 379-388 (GPSTGSTADL). Over residues 389-411 (PSSTAPAPGSAAQSPVAAALGPA) the composition is skewed to low complexity. Residues 440-466 (GNANDPDQNGNTTQSPPSRDVSPTSRD) show a composition bias toward polar residues. Residue Arg-484 is modified to Asymmetric dimethylarginine. The span at 488–509 (PAVGAAPRPGAPPTGDAGAYPP) shows a compositional bias: low complexity. The segment covering 569–579 (TVASPPSSLPQ) has biased composition (polar residues). 5 ANK repeats span residues 695-725 (GRPT…DINY), 729-758 (DGHS…QVNA), 762-791 (NGFT…NINH), 795-824 (GGQT…DRSV), and 828-857 (DGWT…PAHG). Residues 856–886 (HGNSLNEEEPESDVSDLDDGEESSEGESKPV) form a disordered region. Acidic residues predominate over residues 861–880 (NEEEPESDVSDLDDGEESSE). Residues 898-928 (EGWTAAHIAASKGFKNCLEILCRHRGLEPER) form an ANK 6 repeat. Residues 1436 to 1467 (ENGAWRKVNTSPRRKSGRFSSPTWNKPDLSNE) form a disordered region. Ser-1509 carries the post-translational modification Phosphoserine. The interval 1542-1647 (RTFDSSGNNP…HKNEQTHRKT (106 aa)) is disordered. Polar residues-rich tracts occupy residues 1544 to 1559 (FDSS…TVNN) and 1567 to 1584 (KEVS…SNNK). Over residues 1609–1623 (SQNTKRSSSSSNTRQ) the composition is skewed to low complexity. The segment covering 1630–1647 (SKEENWNLHKNEQTHRKT) has biased composition (basic and acidic residues).

As to quaternary structure, interacts with CTTN/cortactin SH3 domain. Interacts with STRN, STRN4/zinedin and MOB4/phocein; this interactions mediate the association with the STRIPAK core complex and may regulate dendritic spine distribution of the STRIPAK complex in hippocampal neurons. Activation of glutamate receptors weakens the interaction with STRN and STRN4.

The protein localises to the cytoplasm. It is found in the cell cortex. The protein resides in the cell projection. Its subcellular location is the dendritic spine. Its function is as follows. Regulates the dendritic spine distribution of CTTN/cortactin in hippocampal neurons, and thus controls dendritic spinogenesis and dendritic spine maintenance. Associates with the striatin-interacting phosphatase and kinase (STRIPAK) core complex to regulate dendritic spine distribution of the STRIPAK complex in hippocampal neurons. This chain is Cortactin-binding protein 2 (CTTNBP2), found in Microcebus murinus (Gray mouse lemur).